Reading from the N-terminus, the 521-residue chain is Probable feruloyl esterase B (521 aa).

A signal peptide spans 1 to 17 (MKVSSLLSVALPGAALA). 2 cysteine pairs are disulfide-bonded: Cys26/Cys72 and Cys61/Cys111. Asn37, Asn51, Asn77, Asn95, Asn144, and Asn177 each carry an N-linked (GlcNAc...) asparagine glycan. 3 disulfides stabilise this stretch: Cys184-Cys438, Cys253-Cys270, and Cys279-Cys288. Ser185 serves as the catalytic Acyl-ester intermediate. Asp254, Asp257, Ala259, Asp261, and Ile263 together coordinate Ca(2+). N-linked (GlcNAc...) asparagine glycans are attached at residues Asn284, Asn347, Asn352, and Asn378. Active-site charge relay system residues include Asp397 and His437. 2 N-linked (GlcNAc...) asparagine glycosylation sites follow: Asn488 and Asn511. Cys498 and Cys520 form a disulfide bridge.

It belongs to the tannase family.

Its subcellular location is the secreted. It carries out the reaction feruloyl-polysaccharide + H2O = ferulate + polysaccharide.. Involved in degradation of plant cell walls. Hydrolyzes the feruloyl-arabinose ester bond in arabinoxylans as well as the feruloyl-galactose and feruloyl-arabinose ester bonds in pectin. The sequence is that of Probable feruloyl esterase B (faeB) from Aspergillus niger (strain ATCC MYA-4892 / CBS 513.88 / FGSC A1513).